A 467-amino-acid polypeptide reads, in one-letter code: Nuclear distribution protein PAC1 (467 aa).

A coiled-coil region spans residues Gly62–Val96. WD repeat units follow at residues Gln121–Ala160, Ala164–Lys212, Ala219–Ser262, His264–Thr302, Pro325–Asn365, Gly385–Ser424, and Ile426–Ile466.

This sequence belongs to the WD repeat LIS1/nudF family. Self-associates. Interacts with NDL1 and dynein.

The protein resides in the cytoplasm. It is found in the cytoskeleton. Its subcellular location is the spindle pole. Functionally, positively regulates the activity of the minus-end directed microtubule motor protein dynein. Plays a central role in positioning the mitotic spindle at the bud neck during cell division. Targets cytoplasmic dynein to microtubule plus ends, thereby promoting dynein-mediated microtubule sliding along the bud cortex and consequently the movement of the mitotic spindle to the bud neck. This is Nuclear distribution protein PAC1 from Candida glabrata (strain ATCC 2001 / BCRC 20586 / JCM 3761 / NBRC 0622 / NRRL Y-65 / CBS 138) (Yeast).